We begin with the raw amino-acid sequence, 101 residues long: Replication restart protein PriB (101 aa).

An SSB domain is found at 1–101 (MTTNSLVLSG…IHAENVELKT (101 aa)).

The protein belongs to the PriB family. In terms of assembly, homodimer. Interacts with PriA and DnaT. Component of the replication restart primosome. Primosome assembly occurs via a 'hand-off' mechanism. PriA binds to replication forks, subsequently PriB then DnaT bind; DnaT then displaces ssDNA to generate the helicase loading substrate.

Involved in the restart of stalled replication forks, which reloads the replicative helicase on sites other than the origin of replication; the PriA-PriB pathway is the major replication restart pathway. During primosome assembly it facilitates complex formation between PriA and DnaT on DNA; stabilizes PriA on DNA. Stimulates the DNA unwinding activity of PriA helicase. In Shewanella putrefaciens (strain CN-32 / ATCC BAA-453), this protein is Replication restart protein PriB.